The following is a 291-amino-acid chain: GCN5-related N-acetyltransferase 4, chloroplastic (291 aa).

The transit peptide at 1–61 (MRSTPLGTTA…PSQINSGACN (61 aa)) directs the protein to the chloroplast. An N-acetyltransferase domain is found at 76 to 280 (IVVREARLED…RFTFMMKLVN (205 aa)). Acetyl-CoA-binding positions include 199–201 (VAV) and 207–212 (RKGIAK). An N6-acetyllysine modification is found at K217. Acetyl-CoA is bound by residues 238–240 (NLG) and Y245. The active-site Proton donor is Y245. N6-acetyllysine occurs at positions 254 and 265.

The protein belongs to the acetyltransferase family. GNAT subfamily. Oligomer. Autoacetylated at K-217, K-254 and K-265. Expressed in green tissues.

It localises to the plastid. The protein resides in the chloroplast. It carries out the reaction an N-terminal L-alpha-aminoacyl-[protein] + acetyl-CoA = N-terminal N(alpha)-acetyl-L-alpha-aminoacyl-[protein] + CoA + H(+). It catalyses the reaction L-lysyl-[protein] + acetyl-CoA = N(6)-acetyl-L-lysyl-[protein] + CoA + H(+). The enzyme catalyses N-terminal L-alanyl-[protein] + acetyl-CoA = N-terminal N(alpha)-acetyl-L-alanyl-[protein] + CoA + H(+). The catalysed reaction is N-terminal L-seryl-[protein] + acetyl-CoA = N-terminal N(alpha)-acetyl-L-seryl-[protein] + CoA + H(+). It carries out the reaction N-terminal L-threonyl-[protein] + acetyl-CoA = N-terminal N(alpha)-acetyl-L-threonyl-[protein] + CoA + H(+). It catalyses the reaction N-terminal L-methionyl-[protein] + acetyl-CoA = N-terminal N(alpha)-acetyl-L-methionyl-[protein] + CoA + H(+). The enzyme catalyses N-terminal L-valyl-[protein] + acetyl-CoA = N-terminal N(alpha)-acetyl-L-valyl-[protein] + CoA + H(+). The catalysed reaction is N-terminal glycyl-[protein] + acetyl-CoA = N-terminal N(alpha)-acetylglycyl-[protein] + CoA + H(+). Protein acetyltransferase with dual specificity triggering both N-alpha-acetylation (NTA), with a large spectrum of modified N-termini, including methionine, alanine, serine, threonine and to a lower extent glycine and valine as substrates, and epsilon-lysine acetylation (KA) of several plastid proteins. This is GCN5-related N-acetyltransferase 4, chloroplastic from Arabidopsis thaliana (Mouse-ear cress).